The sequence spans 458 residues: Argininosuccinate lyase (458 aa).

It belongs to the lyase 1 family. Argininosuccinate lyase subfamily.

The protein resides in the cytoplasm. It catalyses the reaction 2-(N(omega)-L-arginino)succinate = fumarate + L-arginine. Its pathway is amino-acid biosynthesis; L-arginine biosynthesis; L-arginine from L-ornithine and carbamoyl phosphate: step 3/3. This is Argininosuccinate lyase from Acetivibrio thermocellus (strain ATCC 27405 / DSM 1237 / JCM 9322 / NBRC 103400 / NCIMB 10682 / NRRL B-4536 / VPI 7372) (Clostridium thermocellum).